Consider the following 241-residue polypeptide: Accessory protein p30II (241 aa).

Short sequence motifs (nuclear localization signal) lie at residues 73–78 and 91–98; these read RRCRSR and GPRRSRPR. The tract at residues 86–153 is disordered; it reads AFPPGGPRRS…HRNSPTDTKL (68 aa). Positions 107–138 are enriched in low complexity; it reads PSSTVSSSSLSFNSSSKDNSPSTNSSTSRSSG. Positions 175-184 match the Mitochondrial targeting signal motif; the sequence is LRVWRLCTRR.

It belongs to the HTLV-1 accessory protein p30II family. P30II binds to the KIX domains of CREBBP and EP300.

The protein localises to the host nucleus. It localises to the host nucleolus. The protein resides in the host mitochondrion inner membrane. In terms of biological role, p30II is a multifunctional regulator that sequesters EP300/CREBBP and down-regulates CREB-responsive element (CRE) and Tax-responsive element (TRE) mediated transcription. Specifically binds and represses tax/rex mRNA nuclear export. Since Tax and Rex are positive regulators of viral gene expression, their inhibition by p30II reduces virion production, and allows the virus to escape the host immune surveillance and persist latently in an immune-competent host. P13II increases mitochondrial permeability to monovalent cations, producing a rapid, membrane potential-dependent influx of potassium. This could involve a channel-forming activity. Interferes with cell proliferation and transformation and promotes apoptosis induced by ceramide and Fas ligand, probably using the Ras signaling. This is Accessory protein p30II from Human T-cell leukemia virus 1 (isolate Caribbea HS-35 subtype A) (HTLV-1).